Here is a 731-residue protein sequence, read N- to C-terminus: MMRDSPSIQGTLDAATQHALLAGRHADPFSVLGPHQAGAHTVVRVLAPGARTVMAVLPGGQRTPLLPMQPGLFENTVPGLQPGAPAAYRLCIEWEGGIQHTADPYAFGPVLDAAQLDHCAAGGWRYLAGLLGAHAASVDGCAGTRFALWAPNARRVAVVGDFNGWDGRRHAMRLRYPAGVWELFLPDVGPGARYKFQVLGADGHTVLKADPLARQAEAPPATASIVPDERPFAWTDEAWMEQRAARQRCDAPISIYEVHAGSWFDDAGAPRWQSLAARLPEYARSLGFTHIELLPVMAHPFGGSWGYQPLGLFAPAAAHGAPADFAHFVDRCHEAGLGVILDWVPAHFPDDAHGLARLDGTPLYEHADPREGRHPDWNTLIYNYGRREVRAFLIASAIHWLRHYHVDGLRVDAVASMLYRDYSRPAGQWIPNRHGGRENLEAIDFLRELNAAVGVQCPGAITVAEESTAWPGVTAPVANGGLGFDYKWNMGWMHDTLRYMRRDPIHRRHHHHDLSFGMVYAYAERFVLPLSHDEVVHGKGSLLGKMPGERAAQLAQLRLYYAFMWAHPGKKLLFMGGEFGQQGEWNHDAMLQWSLLDDPAHRGLQRLIADLNHVYATLPELHCRDADPSGFAWIVGDDADNSVLAFARVDASHCLVAVCNFTPVPRPGYRFGVPHAGDWRVRVDTGATRYGGAGGGPPICLRSEPIPAHGHPQSLVLDLPGFTALYLRHSE.

The Nucleophile role is filled by aspartate 412. Catalysis depends on glutamate 465, which acts as the Proton donor.

Belongs to the glycosyl hydrolase 13 family. GlgB subfamily. In terms of assembly, monomer.

It carries out the reaction Transfers a segment of a (1-&gt;4)-alpha-D-glucan chain to a primary hydroxy group in a similar glucan chain.. The protein operates within glycan biosynthesis; glycogen biosynthesis. Its function is as follows. Catalyzes the formation of the alpha-1,6-glucosidic linkages in glycogen by scission of a 1,4-alpha-linked oligosaccharide from growing alpha-1,4-glucan chains and the subsequent attachment of the oligosaccharide to the alpha-1,6 position. The protein is 1,4-alpha-glucan branching enzyme GlgB of Bordetella bronchiseptica (strain ATCC BAA-588 / NCTC 13252 / RB50) (Alcaligenes bronchisepticus).